Reading from the N-terminus, the 305-residue chain is Taste receptor type 2 member 136 (305 aa).

Residues 1–9 (MMSFLVSIA) lie on the Extracellular side of the membrane. Residues 10-30 (SIAMLVKIVLGTFANVFIVLV) form a helical membrane-spanning segment. The Cytoplasmic portion of the chain corresponds to 31-46 (NFTDCIKKRKFLLADR). The helical transmembrane segment at 47–67 (ILTVLAIFRFDLLWIILMNWS) threads the bilayer. At 68–69 (SS) the chain is on the extracellular side. Residues 70-90 (VFHVGLYFQVRFCICVVWIVT) form a helical membrane-spanning segment. Residues 91-99 (NHFNTWLAN) are Cytoplasmic-facing. A helical membrane pass occupies residues 100–120 (ILSILYLLKIDNFSNLIFLGL). Over 121 to 127 (KGKIKCP) the chain is Extracellular. The chain crosses the membrane as a helical span at residues 128–148 (YIVLLPCFVLLFPNLIMVTIC). The Cytoplasmic portion of the chain corresponds to 149–176 (ETTQANGHQGNLTGKTKLTYFTNLIAMT). A helical transmembrane segment spans residues 177-197 (FTLGSLVPFTTFMICFLLLIC). Residues 198–223 (SLCKHLRTMRLYGKGSQGPSASTHIK) are Extracellular-facing. Residues 224-244 (VLQVLISFLLLFSMFILLLII) form a helical membrane-spanning segment. Over 245–305 (SDYNYTKSLE…ARFWLKEKKP (61 aa)) the chain is Cytoplasmic.

Belongs to the G-protein coupled receptor T2R family.

Its subcellular location is the membrane. Functionally, putative taste receptor which may play a role in the perception of bitterness. In Mus musculus (Mouse), this protein is Taste receptor type 2 member 136 (Tas2r136).